The chain runs to 47 residues: Protein 0.5 (47 aa).

The signal sequence occupies residues 1 to 23; it reads MYMLTIGLLTALGLAVGASFGKA. Residues 24–43 form a helical membrane-spanning segment; the sequence is LGVAVGSYFTACIIIGIIKG.

It is found in the host membrane. In Escherichia phage T7 (Bacteriophage T7), this protein is Protein 0.5.